A 152-amino-acid chain; its full sequence is Xanthine-guanine phosphoribosyltransferase (152 aa).

Residues 37 to 38, Arg69, and 88 to 96 each bind 5-phospho-alpha-D-ribose 1-diphosphate; these read RG and DDLVDTGVT. Arg69 serves as a coordination point for GMP. Asp89 lines the Mg(2+) pocket. Guanine contacts are provided by Asp92 and Ile135. Positions 92 and 135 each coordinate xanthine. Residues 92–96 and 134–135 contribute to the GMP site; these read DTGVT and WI.

The protein belongs to the purine/pyrimidine phosphoribosyltransferase family. XGPT subfamily. As to quaternary structure, homotetramer. Mg(2+) serves as cofactor.

It is found in the cell inner membrane. It catalyses the reaction GMP + diphosphate = guanine + 5-phospho-alpha-D-ribose 1-diphosphate. The catalysed reaction is XMP + diphosphate = xanthine + 5-phospho-alpha-D-ribose 1-diphosphate. It carries out the reaction IMP + diphosphate = hypoxanthine + 5-phospho-alpha-D-ribose 1-diphosphate. It participates in purine metabolism; GMP biosynthesis via salvage pathway; GMP from guanine: step 1/1. Its pathway is purine metabolism; XMP biosynthesis via salvage pathway; XMP from xanthine: step 1/1. Purine salvage pathway enzyme that catalyzes the transfer of the ribosyl-5-phosphate group from 5-phospho-alpha-D-ribose 1-diphosphate (PRPP) to the N9 position of the 6-oxopurines guanine and xanthine to form the corresponding ribonucleotides GMP (guanosine 5'-monophosphate) and XMP (xanthosine 5'-monophosphate), with the release of PPi. To a lesser extent, also acts on hypoxanthine. This chain is Xanthine-guanine phosphoribosyltransferase, found in Sodalis glossinidius (strain morsitans).